A 375-amino-acid chain; its full sequence is Anhydro-N-acetylmuramic acid kinase (375 aa).

Position 18-25 (18-25 (GTSMDGID)) interacts with ATP.

The protein belongs to the anhydro-N-acetylmuramic acid kinase family.

It carries out the reaction 1,6-anhydro-N-acetyl-beta-muramate + ATP + H2O = N-acetyl-D-muramate 6-phosphate + ADP + H(+). Its pathway is amino-sugar metabolism; 1,6-anhydro-N-acetylmuramate degradation. The protein operates within cell wall biogenesis; peptidoglycan recycling. Catalyzes the specific phosphorylation of 1,6-anhydro-N-acetylmuramic acid (anhMurNAc) with the simultaneous cleavage of the 1,6-anhydro ring, generating MurNAc-6-P. Is required for the utilization of anhMurNAc either imported from the medium or derived from its own cell wall murein, and thus plays a role in cell wall recycling. The polypeptide is Anhydro-N-acetylmuramic acid kinase (Rhodospirillum rubrum (strain ATCC 11170 / ATH 1.1.1 / DSM 467 / LMG 4362 / NCIMB 8255 / S1)).